The primary structure comprises 346 residues: NADH-ubiquinone oxidoreductase chain 2 (346 aa).

10 helical membrane-spanning segments follow: residues 25 to 45 (HWVLAWTGLEINTLAIIPLIS), 60 to 80 (FLTQAAASALVLFSSMTNAWA), 95 to 115 (CLLLTAAIAIKLGLVPFHFWF), 124 to 144 (LMTALLLSTLMKFPPLTLLLM), 149 to 169 (LNPALLTAMALASTALGGWMG), 178 to 195 (ILAFSSISHLGWIAIILV), 200 to 219 (LALLTFYLYTIMTSAVFMAL), 247 to 267 (VLLSLAGLPPLTGFMPKWLII), 274 to 294 (EMTPAAMAIAMLSLLSLFFYL), and 326 to 346 (AILASLSILLLPLSPMVHAIV).

This sequence belongs to the complex I subunit 2 family.

The protein localises to the mitochondrion inner membrane. It carries out the reaction a ubiquinone + NADH + 5 H(+)(in) = a ubiquinol + NAD(+) + 4 H(+)(out). Its function is as follows. Core subunit of the mitochondrial membrane respiratory chain NADH dehydrogenase (Complex I) that is believed to belong to the minimal assembly required for catalysis. Complex I functions in the transfer of electrons from NADH to the respiratory chain. The immediate electron acceptor for the enzyme is believed to be ubiquinone. The sequence is that of NADH-ubiquinone oxidoreductase chain 2 (MT-ND2) from Anas capensis (Cape teal).